We begin with the raw amino-acid sequence, 248 residues long: 3-deoxy-manno-octulosonate cytidylyltransferase (248 aa).

It belongs to the KdsB family.

The protein resides in the cytoplasm. It catalyses the reaction 3-deoxy-alpha-D-manno-oct-2-ulosonate + CTP = CMP-3-deoxy-beta-D-manno-octulosonate + diphosphate. It participates in nucleotide-sugar biosynthesis; CMP-3-deoxy-D-manno-octulosonate biosynthesis; CMP-3-deoxy-D-manno-octulosonate from 3-deoxy-D-manno-octulosonate and CTP: step 1/1. Its pathway is bacterial outer membrane biogenesis; lipopolysaccharide biosynthesis. Its function is as follows. Activates KDO (a required 8-carbon sugar) for incorporation into bacterial lipopolysaccharide in Gram-negative bacteria. This Salmonella typhi protein is 3-deoxy-manno-octulosonate cytidylyltransferase.